Reading from the N-terminus, the 220-residue chain is N-(5'-phosphoribosyl)anthranilate isomerase (220 aa).

Belongs to the TrpF family.

The catalysed reaction is N-(5-phospho-beta-D-ribosyl)anthranilate = 1-(2-carboxyphenylamino)-1-deoxy-D-ribulose 5-phosphate. The protein operates within amino-acid biosynthesis; L-tryptophan biosynthesis; L-tryptophan from chorismate: step 3/5. In Xylella fastidiosa (strain M12), this protein is N-(5'-phosphoribosyl)anthranilate isomerase.